A 240-amino-acid chain; its full sequence is Ribonuclease 3 (240 aa).

One can recognise an RNase III domain in the interval 9 to 141 (VEEFQKKTGI…LLAAIYLDQG (133 aa)). Mg(2+) is bound at residue Glu54. Residue Asp58 is part of the active site. Residues Asp127 and Glu130 each coordinate Mg(2+). Glu130 is an active-site residue. The region spanning 168 to 237 (DYKTALQEIV…ARIAYEKLLK (70 aa)) is the DRBM domain.

This sequence belongs to the ribonuclease III family. As to quaternary structure, homodimer. The cofactor is Mg(2+).

It is found in the cytoplasm. It catalyses the reaction Endonucleolytic cleavage to 5'-phosphomonoester.. Digests double-stranded RNA. Involved in the processing of primary rRNA transcript to yield the immediate precursors to the large and small rRNAs (23S and 16S). Processes some mRNAs, and tRNAs when they are encoded in the rRNA operon. Processes pre-crRNA and tracrRNA of type II CRISPR loci if present in the organism. The sequence is that of Ribonuclease 3 from Thermotoga sp. (strain RQ2).